Here is a 434-residue protein sequence, read N- to C-terminus: UPF0597 protein CLB_1949 (434 aa).

The protein belongs to the UPF0597 family.

This Clostridium botulinum (strain ATCC 19397 / Type A) protein is UPF0597 protein CLB_1949.